The following is a 264-amino-acid chain: Small ribosomal subunit protein eS1B (264 aa).

Residues 233–264 (GEGGGSGKPAADETGAKVERADGYEPPVQESV) are disordered. Residues 242-255 (AADETGAKVERADG) are compositionally biased toward basic and acidic residues.

The protein belongs to the eukaryotic ribosomal protein eS1 family. As to quaternary structure, component of the small ribosomal subunit. Mature ribosomes consist of a small (40S) and a large (60S) subunit. The 40S subunit contains about 33 different proteins and 1 molecule of RNA (18S). The 60S subunit contains about 49 different proteins and 3 molecules of RNA (28S, 5.8S and 5S). Part of the small subunit (SSU) processome, composed of more than 70 proteins and the RNA chaperone small nucleolar RNA (snoRNA) U3.

It is found in the cytoplasm. It localises to the nucleus. The protein resides in the nucleolus. Component of the small ribosomal subunit. The ribosome is a large ribonucleoprotein complex responsible for the synthesis of proteins in the cell. Part of the small subunit (SSU) processome, first precursor of the small eukaryotic ribosomal subunit. During the assembly of the SSU processome in the nucleolus, many ribosome biogenesis factors, an RNA chaperone and ribosomal proteins associate with the nascent pre-rRNA and work in concert to generate RNA folding, modifications, rearrangements and cleavage as well as targeted degradation of pre-ribosomal RNA by the RNA exosome. May play a role during erythropoiesis. The polypeptide is Small ribosomal subunit protein eS1B (rps3a-b) (Xenopus laevis (African clawed frog)).